A 36-amino-acid chain; its full sequence is Alpha-conotoxin-like Pu1.3 (36 aa).

Positions 1–21 (SDGRNAGADRKGFGLISQMFK) are excised as a propeptide. Disulfide bonds link Cys-24–Cys-30 and Cys-25–Cys-36.

The protein belongs to the conotoxin A superfamily. Expressed by the venom duct.

Its subcellular location is the secreted. Functionally, alpha-conotoxins act on postsynaptic membranes, they bind to the nicotinic acetylcholine receptors (nAChR) and thus inhibit them. This is Alpha-conotoxin-like Pu1.3 from Conus pulicarius (Flea-bitten cone).